The primary structure comprises 179 residues: Large ribosomal subunit protein uL5 (179 aa).

This sequence belongs to the universal ribosomal protein uL5 family. In terms of assembly, part of the 50S ribosomal subunit; part of the 5S rRNA/L5/L18/L25 subcomplex. Contacts the 5S rRNA and the P site tRNA. Forms a bridge to the 30S subunit in the 70S ribosome.

In terms of biological role, this is one of the proteins that bind and probably mediate the attachment of the 5S RNA into the large ribosomal subunit, where it forms part of the central protuberance. In the 70S ribosome it contacts protein S13 of the 30S subunit (bridge B1b), connecting the 2 subunits; this bridge is implicated in subunit movement. Contacts the P site tRNA; the 5S rRNA and some of its associated proteins might help stabilize positioning of ribosome-bound tRNAs. In Nitratidesulfovibrio vulgaris (strain ATCC 29579 / DSM 644 / CCUG 34227 / NCIMB 8303 / VKM B-1760 / Hildenborough) (Desulfovibrio vulgaris), this protein is Large ribosomal subunit protein uL5.